Here is a 216-residue protein sequence, read N- to C-terminus: Small ribosomal subunit protein eS6 (216 aa).

This sequence belongs to the eukaryotic ribosomal protein eS6 family.

The protein is Small ribosomal subunit protein eS6 of Staphylothermus marinus (strain ATCC 43588 / DSM 3639 / JCM 9404 / F1).